The sequence spans 682 residues: Potassium-transporting ATPase ATP-binding subunit (682 aa).

4 helical membrane passes run 34-54, 58-78, 219-239, and 254-274; these read PVMF…LAMV, IAGS…TVLF, IALT…TATL, and VLVA…LSAI. The 4-aspartylphosphate intermediate role is filled by aspartate 307. ATP is bound by residues aspartate 344, glutamate 348, 377 to 384, and lysine 395; that span reads FTAQSRMS. The Mg(2+) site is built by aspartate 518 and aspartate 522. The next 3 helical transmembrane spans lie at 588–608, 616–636, and 662–682; these read FAII…LNVM, AILS…PLAL, and LVVP…LGLA.

The protein belongs to the cation transport ATPase (P-type) (TC 3.A.3) family. Type IA subfamily. As to quaternary structure, the system is composed of three essential subunits: KdpA, KdpB and KdpC.

It is found in the cell inner membrane. It carries out the reaction K(+)(out) + ATP + H2O = K(+)(in) + ADP + phosphate + H(+). Functionally, part of the high-affinity ATP-driven potassium transport (or Kdp) system, which catalyzes the hydrolysis of ATP coupled with the electrogenic transport of potassium into the cytoplasm. This subunit is responsible for energy coupling to the transport system and for the release of the potassium ions to the cytoplasm. This Salmonella enteritidis PT4 (strain P125109) protein is Potassium-transporting ATPase ATP-binding subunit.